The chain runs to 145 residues: Transcriptional regulator ZitR (145 aa).

Residues 1 to 142 (MSLANQIDQF…ISQFLSVLTE (142 aa)) form the HTH marR-type domain. Positions 23, 29, 40, and 41 each coordinate Zn(2+). Residues 53–76 (NARIAEQLKISPAAVTKALKKLQE) constitute a DNA-binding region (H-T-H motif). The Zn(2+) site is built by E106, H107, and H111.

Homodimer.

With respect to regulation, zinc acts as a corepressor and is required for DNA-binding activity. Binds up to two zinc ligands per monomer. Inactive under zinc deprivation. In terms of biological role, zinc-responsive regulator that represses expression of the zit operon in the presence of zinc. Acts by binding two palindromic operator sites overlapping the -35 and -10 boxes of the zit promoter. Could be a sensitive sensor of intracellular zinc to efficiently respond to zinc variations in the environment. The sequence is that of Transcriptional regulator ZitR (zitR) from Lactococcus lactis subsp. cremoris (strain MG1363).